The sequence spans 127 residues: Ribosome-binding factor A (127 aa).

It belongs to the RbfA family. As to quaternary structure, monomer. Binds 30S ribosomal subunits, but not 50S ribosomal subunits or 70S ribosomes.

It localises to the cytoplasm. Functionally, one of several proteins that assist in the late maturation steps of the functional core of the 30S ribosomal subunit. Associates with free 30S ribosomal subunits (but not with 30S subunits that are part of 70S ribosomes or polysomes). Required for efficient processing of 16S rRNA. May interact with the 5'-terminal helix region of 16S rRNA. The protein is Ribosome-binding factor A of Actinobacillus pleuropneumoniae serotype 7 (strain AP76).